Consider the following 273-residue polypeptide: Cbp/p300-interacting transactivator 2 (273 aa).

Residues 137 to 204 form a disordered region; that stretch reads DLHPAAGHQM…GSGGSGSSNM (68 aa). Gly residues predominate over residues 165–200; it reads STPGGSGGSSTPGGSGGSAGGGAGSSNSGGGSGGSG.

It belongs to the CITED family. Interacts (via C-terminus) with SMAD2. Interacts (via C-terminus) with SMAD3 (via MH2 domain). Interacts with LHX2 (via LIM domains). Interacts with WT1. Interacts (via C-terminus) with EP300 (via CH1 domain); the interaction is stimulated in response to hypoxia. Interacts with PPARA. Interacts (via C-terminus) with TFAP2A, TFAP2B and TFAP2C.

Its subcellular location is the nucleus. Transcriptional coactivator of the p300/CBP-mediated transcription complex. Acts as a bridge, linking TFAP2 transcription factors and the p300/CBP transcriptional coactivator complex in order to stimulate TFAP2-mediated transcriptional activation. Positively regulates TGF-beta signaling through its association with the SMAD/p300/CBP-mediated transcriptional coactivator complex. Stimulates the peroxisome proliferator-activated receptors PPARA transcriptional activity. Enhances estrogen-dependent transactivation mediated by estrogen receptors. Also acts as a transcriptional corepressor; interferes with the binding of the transcription factors HIF1A or STAT2 and the p300/CBP transcriptional coactivator complex. Participates in sex determination and early gonad development by stimulating transcription activation of SRY. Plays a role in controlling left-right patterning during embryogenesis; potentiates transcriptional activation of NODAL-mediated gene transcription in the left lateral plate mesoderm (LPM). Plays an essential role in differentiation of the adrenal cortex from the adrenogonadal primordium (AGP); stimulates WT1-mediated transcription activation thereby up-regulating the nuclear hormone receptor NR5A1 promoter activity. Associates with chromatin to the PITX2 P1 promoter region. This chain is Cbp/p300-interacting transactivator 2 (CITED2), found in Saguinus labiatus (Red-chested mustached tamarin).